A 335-amino-acid chain; its full sequence is GTPase Obg (335 aa).

The region spanning 1-158 (MFVDQITLEL…RQVELELKLI (158 aa)) is the Obg domain. Positions 126 to 145 (NTFFKTSVNRAPTKATPGKP) are disordered. An OBG-type G domain is found at 159–334 (ADIGLVGFPN…LYRFFTQRLA (176 aa)). GTP is bound by residues 165-172 (GFPNAGKS), 190-194 (FTTLA), 215-218 (DIPG), 285-288 (NKID), and 315-317 (SGL). The Mg(2+) site is built by serine 172 and threonine 192.

It belongs to the TRAFAC class OBG-HflX-like GTPase superfamily. OBG GTPase family. As to quaternary structure, monomer. The cofactor is Mg(2+).

The protein resides in the cytoplasm. An essential GTPase which binds GTP, GDP and possibly (p)ppGpp with moderate affinity, with high nucleotide exchange rates and a fairly low GTP hydrolysis rate. Plays a role in control of the cell cycle, stress response, ribosome biogenesis and in those bacteria that undergo differentiation, in morphogenesis control. In Chlamydia pneumoniae (Chlamydophila pneumoniae), this protein is GTPase Obg.